Reading from the N-terminus, the 454-residue chain is Nuclear distribution protein PAC1-1 (454 aa).

The region spanning 9-41 (QAEELHRALIAYLSSNNLTSTAAALRAEIGLGE) is the LisH domain. The segment at 71-93 (RHTSQLSNATPTSRQNKDPVNWL) is disordered. Over residues 73-84 (TSQLSNATPTSR) the composition is skewed to polar residues. WD repeat units follow at residues 104-145 (SHRQ…RTIK), 147-187 (HTKT…KNIR), 191-236 (GHDH…CVKT), 239-278 (GHAE…PEPK), 283-342 (GHEH…IKIL), 344-383 (GHDN…RCVK), and 388-450 (AHAH…LNVR).

The protein belongs to the WD repeat LIS1/nudF family. In terms of assembly, self-associates. Interacts with NDL1 and dynein.

The protein resides in the cytoplasm. It is found in the cytoskeleton. The protein localises to the spindle pole. Functionally, positively regulates the activity of the minus-end directed microtubule motor protein dynein. May enhance dynein-mediated microtubule sliding by targeting dynein to the microtubule plus end. Required for nuclear migration during vegetative growth as well as development. Required for retrograde early endosome (EE) transport from the hyphal tip. Required for localization of dynein to the mitotic spindle poles. Recruits additional proteins to the dynein complex at SPBs. The chain is Nuclear distribution protein PAC1-1 from Chaetomium globosum (strain ATCC 6205 / CBS 148.51 / DSM 1962 / NBRC 6347 / NRRL 1970) (Soil fungus).